Consider the following 225-residue polypeptide: Cytidylate kinase (225 aa).

Residue 12–20 (GPSGAGKGT) participates in ATP binding.

It belongs to the cytidylate kinase family. Type 1 subfamily.

The protein localises to the cytoplasm. It carries out the reaction CMP + ATP = CDP + ADP. The catalysed reaction is dCMP + ATP = dCDP + ADP. The sequence is that of Cytidylate kinase from Pectobacterium atrosepticum (strain SCRI 1043 / ATCC BAA-672) (Erwinia carotovora subsp. atroseptica).